A 2562-amino-acid chain; its full sequence is Zinc finger homeobox protein 2 (2562 aa).

Positions 1 to 13 (MATLNSASPSGTV) are enriched in polar residues. Disordered regions lie at residues 1 to 88 (MATL…PPKD) and 337 to 410 (PSPP…DPPP). Positions 56-73 (GGERLESGSDLDPPKEIG) are enriched in basic and acidic residues. 2 consecutive C2H2-type zinc fingers follow at residues 446–469 (LKCP…REKH) and 501–525 (YRCD…SDKH). 3 disordered regions span residues 530–559 (QGFQ…EPKT), 603–651 (PPGL…PDKP), and 669–705 (RKFP…PSPD). The span at 609-622 (PGPPPPPGAAPTNP) shows a compositional bias: pro residues. The segment covering 690 to 704 (LLGSSSDGLPTSPSP) has biased composition (polar residues). C2H2-type zinc fingers lie at residues 752–776 (HRCK…TDKH), 815–839 (LRCN…GSAH), and 864–888 (YHCL…TPAH). The segment at 923 to 966 (RLQTPGKASDTPLAQPPTSEKDAQNKTEQQASEVTEDRSGPPRD) is disordered. The C2H2-type 6 zinc-finger motif lies at 1003-1026 (YRCPLCQEQLVGRPALHFHLSHLH). Disordered stretches follow at residues 1058–1126 (NPVE…PAPR) and 1140–1166 (MSEE…HPLT). 2 stretches are compositionally biased toward pro residues: residues 1091-1101 (SPDPPLEPPLA) and 1114-1124 (DQPPSPAPSPA). 2 consecutive C2H2-type zinc fingers follow at residues 1185-1211 (YKCT…SHLH) and 1242-1266 (FKCT…SVLH). Residues 1278 to 1305 (RAEGAERGQEEFKEGETEGEAGTEKKGP) show a composition bias toward basic and acidic residues. Positions 1278–1313 (RAEGAERGQEEFKEGETEGEAGTEKKGPDPGGFMSG) are disordered. Residues 1474–1497 (LACGACGKLFSNMLILKTHEEHVH) form a C2H2-type 9 zinc finger. The tract at residues 1520-1584 (LYPPPVEPPK…EGSRGSLPPA (65 aa)) is disordered. Residues 1521–1531 (YPPPVEPPKPP) are compositionally biased toward pro residues. The homeobox 1 DNA-binding region spans 1589-1648 (RRFSRTKFTEFQTQALQSFFETSAYPKDGEVERLASLLGLASRVVVVWFQNARQKARKNA). The segment at 1664–1687 (SGCRRCHATFACVFELVRHLKKCY) adopts a C2H2-type 10; degenerate zinc-finger fold. Residues 1689–1760 (DQPPEEEEEA…EGKAPPSPPV (72 aa)) form a disordered region. Acidic residues predominate over residues 1690–1713 (QPPEEEEEAERGEEEEEVEEEEAE). Positions 1743-1752 (TRPESKESEG) are enriched in basic and acidic residues. The C2H2-type 11 zinc finger occupies 1761–1783 (YACDQCAASFPSQDLLTTHHRLH). Disordered stretches follow at residues 1814–1853 (SGTS…KDKR), 1907–1934 (RKGQ…PAPF), 1971–2057 (PLPF…DSMG), 2114–2136 (KKAK…TSAA), 2186–2210 (PAPE…PLGA), 2263–2313 (QTAG…PNSS), and 2391–2429 (LQQP…LTGS). The segment at residues 1851-1910 (DKRLRTTILPEQLEILYRWYMQDSNPTRKMLDCISEEVGLKKRVVQVWFQNTRARERKGQ) is a DNA-binding region (homeobox 2). Over residues 1985 to 1996 (TPEPPPPLPPPA) the composition is skewed to pro residues. Residues 2008 to 2037 (KASPESEACSPSAGDLSDSSASSLAEPESP) are compositionally biased toward low complexity. Residues 2038 to 2051 (GAGGTSGGPGGGTG) are compositionally biased toward gly residues. Residues 2058–2117 (QRRYRTQMSSLQLKIMKACYEAYRTPTMQECEVLGEEIGLPKRVIQVWFQNARAKEKKAK) constitute a DNA-binding region (homeobox 3). Residues 2188 to 2200 (PETPLAPKGPPAT) are compositionally biased toward pro residues. Over residues 2275–2286 (PVSNQTNSSTDP) the composition is skewed to polar residues. Over residues 2295 to 2305 (SGDKVSGERKP) the composition is skewed to basic and acidic residues. Residues 2395–2411 (PQAPEPTATAPPKPPEL) show a composition bias toward pro residues. Residues 2441–2461 (YLCRQCKMAFDGEAPATAHQR) form a C2H2-type 12; degenerate zinc finger. The C2H2-type 13 zinc-finger motif lies at 2485-2509 (YHCLACEVLLSGREALASHLRSSAH). Disordered regions lie at residues 2506-2525 (SSAH…ITVT) and 2540-2562 (EEAR…LLAL). Residues 2553–2562 (TTTTSTLLAL) show a composition bias toward low complexity.

In terms of tissue distribution, expressed in brain (at protein level). Expressed at the highest levels in the pyramidal cell layer of the hippocampus, the suprachiasmatic nucleus, laterodorsal thalamic nucleus, lateral geniculate nucleus, substantia nigra pars compacta, and magnocellular part of the red nucleus (at protein level). Highly expressed in dorsal root ganglia. Expressed at lower levels in kidney, stomach, liver, heart and testis.

It localises to the nucleus. In terms of biological role, transcriptional regulator that is critical for the regulation of pain perception and processing of noxious stimuli. In Mus musculus (Mouse), this protein is Zinc finger homeobox protein 2.